Consider the following 681-residue polypeptide: DNA-directed RNA polymerase subunit beta' (681 aa).

Positions 69, 71, 87, and 90 each coordinate Zn(2+). 3 residues coordinate Mg(2+): Asp-490, Asp-492, and Asp-494.

Belongs to the RNA polymerase beta' chain family. RpoC1 subfamily. As to quaternary structure, in plastids the minimal PEP RNA polymerase catalytic core is composed of four subunits: alpha, beta, beta', and beta''. When a (nuclear-encoded) sigma factor is associated with the core the holoenzyme is formed, which can initiate transcription. Requires Mg(2+) as cofactor. It depends on Zn(2+) as a cofactor.

The protein localises to the plastid. It is found in the chloroplast. It catalyses the reaction RNA(n) + a ribonucleoside 5'-triphosphate = RNA(n+1) + diphosphate. In terms of biological role, DNA-dependent RNA polymerase catalyzes the transcription of DNA into RNA using the four ribonucleoside triphosphates as substrates. The chain is DNA-directed RNA polymerase subunit beta' from Liriodendron tulipifera (Tuliptree).